Here is a 105-residue protein sequence, read N- to C-terminus: Sulfite reductase, dissimilatory-type subunit gamma (105 aa).

This sequence belongs to the DsrC/TusE family. Heterohexamer of two alpha, two beta and two gamma subunits.

Its subcellular location is the cytoplasm. The catalysed reaction is [DsrC protein]-trisulfide + NAD(+) + 3 H2O = [DsrC protein]-dithiol + sulfite + NADH + 3 H(+). Functionally, catalyzes the reduction of sulfite to sulfide. This is the terminal oxidation reaction in sulfate respiration, a process catalyzed by the sulfate-reducing bacteria. In Nitratidesulfovibrio vulgaris (strain ATCC 29579 / DSM 644 / CCUG 34227 / NCIMB 8303 / VKM B-1760 / Hildenborough) (Desulfovibrio vulgaris), this protein is Sulfite reductase, dissimilatory-type subunit gamma (dsvC).